A 219-amino-acid polypeptide reads, in one-letter code: Flagellar transcriptional regulator FlhC (219 aa).

Residues cysteine 137, cysteine 140, cysteine 157, and cysteine 160 each contribute to the Zn(2+) site.

The protein belongs to the FlhC family. Heterohexamer composed of two FlhC and four FlhD subunits. Each FlhC binds a FlhD dimer, forming a heterotrimer, and a hexamer assembles by dimerization of two heterotrimers. Zn(2+) is required as a cofactor.

It is found in the cytoplasm. Functions in complex with FlhD as a master transcriptional regulator that regulates transcription of several flagellar and non-flagellar operons by binding to their promoter region. Activates expression of class 2 flagellar genes, including fliA, which is a flagellum-specific sigma factor that turns on the class 3 genes. Also regulates genes whose products function in a variety of physiological pathways. In Paraburkholderia phymatum (strain DSM 17167 / CIP 108236 / LMG 21445 / STM815) (Burkholderia phymatum), this protein is Flagellar transcriptional regulator FlhC.